Consider the following 341-residue polypeptide: Phosphate acyltransferase (341 aa).

It belongs to the PlsX family. Homodimer. Probably interacts with PlsY.

The protein localises to the cytoplasm. The enzyme catalyses a fatty acyl-[ACP] + phosphate = an acyl phosphate + holo-[ACP]. It participates in lipid metabolism; phospholipid metabolism. Functionally, catalyzes the reversible formation of acyl-phosphate (acyl-PO(4)) from acyl-[acyl-carrier-protein] (acyl-ACP). This enzyme utilizes acyl-ACP as fatty acyl donor, but not acyl-CoA. In Saccharophagus degradans (strain 2-40 / ATCC 43961 / DSM 17024), this protein is Phosphate acyltransferase.